A 62-amino-acid polypeptide reads, in one-letter code: Guanine nucleotide-binding protein subunit gamma (62 aa).

Cys59 is subject to Cysteine methyl ester. Cys59 is lipidated: S-geranylgeranyl cysteine. A propeptide spans 60–62 (SVL) (removed in mature form).

It belongs to the G protein gamma family. As to quaternary structure, g proteins are composed of 3 units, alpha, beta and gamma. Interacts with gpb-1 and gpb-2.

Its subcellular location is the cell membrane. Guanine nucleotide-binding proteins (G proteins) are involved as a modulator or transducer in various transmembrane signaling systems. The beta and gamma chains are required for the GTPase activity, for replacement of GDP by GTP, and for G protein-effector interaction. The protein is Guanine nucleotide-binding protein subunit gamma (gpc-1) of Caenorhabditis briggsae.